Reading from the N-terminus, the 217-residue chain is GTP-binding protein Rit2 (217 aa).

GTP contacts are provided by residues G27–S34, D74–Q78, and N133–D136.

Belongs to the small GTPase superfamily. Ras family. As to quaternary structure, interacts with PLXNB3. Interacts with AFDN, the C-terminal domain of RALGDS and RLF, but not with RIN1 and PIK3CA. RLF binds exclusively to the active GTP-bound form. Binds calmodulin. Interacts with POU4F1 (via N-terminus); the interaction controls POU4F1 transactivation activity on some neuronal target genes. In terms of tissue distribution, expressed in ganglion cell layer (GCL), inner plexiform layer (IPL) and inner nuclear layer (INL) of the retina. Expressed in retinal ganglion cells (RGCs). Expressed in horizontal, bipolar and amacrine cells, but not Mueller glia, of the INL (at protein level). Neuron-specific. Expressed in ganglion cell layer (GCL) and inner plexiform layer (IPL).

It is found in the nucleus. The protein resides in the cell membrane. It carries out the reaction GTP + H2O = GDP + phosphate + H(+). With respect to regulation, alternates between an inactive form bound to GDP and an active form bound to GTP. Binds and exchanges GTP and GDP. Binds and modulates the activation of POU4F1 as gene expression regulator. The sequence is that of GTP-binding protein Rit2 (Rit2) from Mus musculus (Mouse).